Here is a 462-residue protein sequence, read N- to C-terminus: RuvB-like 2 (462 aa).

76–83 contributes to the ATP binding site; that stretch reads GQPGTGKT.

The protein belongs to the RuvB family. In terms of assembly, forms homohexameric rings. Can form a dodecamer with ruvbl2 made of two stacked hexameric rings. Is a component of the RNA polymerase II holoenzyme complex. Component of the chromatin-remodeling Ino80 complex. Component of some MLL1/MLL complex.

The protein localises to the nucleus. Its subcellular location is the dynein axonemal particle. The enzyme catalyses ATP + H2O = ADP + phosphate + H(+). Functionally, has single-stranded DNA-stimulated ATPase and ATP-dependent DNA helicase (5' to 3') activity suggesting a role in nuclear processes such as recombination and transcription. Proposed core component of the chromatin remodeling INO80 complex which exhibits DNA- and nucleosome-activated ATPase activity and catalyzes ATP-dependent nucleosome sliding. Involved in the endoplasmic reticulum (ER)-associated degradation (ERAD) pathway where it negatively regulates expression of ER stress response genes. This Xenopus laevis (African clawed frog) protein is RuvB-like 2 (ruvbl2).